We begin with the raw amino-acid sequence, 114 residues long: Nucleoid-associated protein THEYE_A1069 (114 aa).

The protein belongs to the YbaB/EbfC family. As to quaternary structure, homodimer.

The protein resides in the cytoplasm. It localises to the nucleoid. In terms of biological role, binds to DNA and alters its conformation. May be involved in regulation of gene expression, nucleoid organization and DNA protection. In Thermodesulfovibrio yellowstonii (strain ATCC 51303 / DSM 11347 / YP87), this protein is Nucleoid-associated protein THEYE_A1069.